Consider the following 253-residue polypeptide: Probable transcriptional regulatory protein Mlut_12910 (253 aa).

Belongs to the TACO1 family.

The protein resides in the cytoplasm. The sequence is that of Probable transcriptional regulatory protein Mlut_12910 from Micrococcus luteus (strain ATCC 4698 / DSM 20030 / JCM 1464 / CCM 169 / CCUG 5858 / IAM 1056 / NBRC 3333 / NCIMB 9278 / NCTC 2665 / VKM Ac-2230) (Micrococcus lysodeikticus).